A 720-amino-acid chain; its full sequence is NAD(+) hydrolase ApTIR (720 aa).

One can recognise a TIR domain in the interval 1–131 (MRYDAFISYS…AVPPALRGVF (131 aa)). NAD(+) is bound by residues 10 to 11 (SH) and Ala-48. Residue Glu-84 is part of the active site. Residues 192 to 211 (GALAVVCALLLLVAGTAVAW) traverse the membrane as a helical segment. Disordered stretches follow at residues 231–275 (ATAA…AVAE) and 292–359 (EGIA…EEAV). 2 stretches are compositionally biased toward basic and acidic residues: residues 256–268 (EQQRAQKAAEEAR) and 307–359 (AEAR…EEAV). Positions 313-362 (RGVADAEKAKANRAAAEAERQRKIAADEQRKAHEAAAEAERQREEAVKQQ) form a coiled coil. WD repeat units lie at residues 420–459 (GHTAVVSAVALSGDGRTLVTDGLDGTVMVWDPTDRAAPRR), 465–504 (SSTAPVYTVALSGDGRTLVTGSEDGTAMVWDLTDRAAPRR), 510–549 (GHTDVVDAVALSGDGRTLATGSFDGTAMVWDVTDRAAPRR), 555–594 (DHTAPVTAVALSGDGRTLATGSDDHTAMVWDLTDRAAPRR), 600–639 (GHTAGVDAVALSGDGRTLATGSYDGTAMLWDLTDRAAPRR), 645–684 (GHTAQVYTVALSRDGRTLATGSEDHTAMVWDLTDRAAPRR), and 690–720 (GHTDAVDAVALSGDGRTLATAASITRRCCGM).

It localises to the cell membrane. The catalysed reaction is NAD(+) + H2O = ADP-D-ribose + nicotinamide + H(+). In terms of biological role, NAD(+) hydrolase (NADase) that catalyzes cleavage of NAD(+) into ADP-D-ribose (ADPR) and nicotinamide. The sequence is that of NAD(+) hydrolase ApTIR from Actinoplanes sp. (strain ATCC 31044 / CBS 674.73 / SE50/110).